The following is an 8922-amino-acid chain: Protein clarinet (8922 aa).

A disordered region spans residues 11–35; the sequence is SKGPPLEEVREESEEDAQVPEQVVS. Residues 19–28 show a composition bias toward acidic residues; that stretch reads VREESEEDAQ. The stretch at 385–405 forms a coiled coil; it reads KDETKLILKSVEDKLETTEIE. Disordered stretches follow at residues 527–579, 622–673, 687–860, 880–955, 971–1049, 1062–1139, 1151–1331, 1347–1420, 1444–1520, 1538–1619, 1632–1710, 1726–1801, 1820–1898, 1939–1992, 2032–2084, 2126–2175, 2194–2213, 2220–2246, 2329–2403, 2423–2497, 2516–2594, 2610–2684, 2704–2845, 2892–2963, 2983–3155, 3171–3249, 3268–3337, 3619–3639, 3995–4079, 4117–4169, 4181–4271, 4557–4624, 4636–4656, 4666–4685, 4730–4801, 4855–4899, 5004–5036, 5360–5379, 5390–5413, 5484–5511, 5540–5572, 6194–6303, 6354–6437, 6487–6510, 6577–6609, 6668–6691, 6728–6768, 6998–7018, 7045–7098, 7137–7175, 7202–7263, 7313–7350, 7598–7623, 7760–7797, and 7842–7881; these read QEAA…EPEL, IVIS…EPEL, LAEK…KEPE, SFEQ…EPEL, EQSS…EPEL, SSAE…MESR, IARI…EPEL, EQSS…VMES, SFEQ…PELT, SFEQ…EEID, SFEQ…LTQE, SFEQ…VPEL, VISE…LTQE, IVIS…SELT, IVIS…SKEP, QSSFEQASTITDRPPLPVRL, IVISEQHEGDRSSATPGADYERSYDQD, SFEQ…KKPE, SFEQ…KPEL, SFEQ…KEPE, SFEQ…ERPF, SFEQ…MESK, SFEQ…PVML, SITPSEGDDGGSSETGHPTTD, AEPV…QEEI, IVIS…PELT, SLAE…STTI, QASA…TQEE, EQSSFEQASTIPDRPPLPVRL, SEQHEGDISSATSGADYERS, EQSS…GVTQ, PANP…PLQD, PEDFSEATSGADTESISETTANKKDSNDSNGLT, LAMFTNPSPSASPSLLRKES, RRSSGADSRASNDSSASRLPDTAL, KKQISSRTESTNSRVSSEGIDEEVENEV, PPIAISHPTPPHSAKTDTGSRHSSGSSAHSQFG, AEPV…ESES, DVES…GSRM, SSKSSTSLGTSAPTKSIPSPQIGI, ARFPPPSSQIPTRSPSVMSSSIMSELPPGLDDL, NAETDSSSSVITSRQPSRSPSVAR, AEFE…VPPG, TERKQREESPTRESGYATSTS, ARSR…DDFD, FDGDESELPHQDFVFNEPTTKKTSDFDFPKETDEVFEKP, EAPS…YPDR, KTTTSQTPSTSTKPTVTAPKRSDPIPIAPSQRSKEIEE, DSVRDDNERNENETTSPRGLKRSPGM, TRRHQHQQQHQAPVYITSSASRPPSAAGSNIFQESRPT, and HIRQPVSVRSPRAQTGTTQTTAASGSASNSIRPSIGSSSV. Over residues 531 to 552 the composition is skewed to basic and acidic residues; that stretch reads SDNHEKERSSATSKADYERSFD. Residues 760 to 776 show a composition bias toward basic and acidic residues; that stretch reads MESKEPELTQEEIDHIA. Low complexity predominate over residues 1062–1076; the sequence is SSAEQSSFEQASTVP. Basic and acidic residues predominate over residues 1230–1244; that stretch reads MESKEPELTQEEIDH. Over residues 1251 to 1261 the composition is skewed to polar residues; it reads IAEQSSFEQAS. 2 stretches are compositionally biased toward basic and acidic residues: residues 1606–1619 and 1700–1710; these read MESKEPELTQEEID and MESKEPELTQE. 2 stretches are compositionally biased toward basic and acidic residues: residues 1888–1898 and 1982–1992; these read MESKEPELTQE and MESKESELTQE. Over residues 2194–2204 the composition is skewed to polar residues; that stretch reads QSSFEQASTIT. Residues 2584 to 2594 show a composition bias toward basic and acidic residues; the sequence is MESKEPELTQE. Residues 2772 to 2788 show a composition bias toward basic and acidic residues; sequence MESKEPELTQEEIDHIA. The span at 2793–2803 shows a compositional bias: polar residues; it reads LAEQSSFEQAS. The segment covering 3076–3085 has biased composition (polar residues); the sequence is APSSSFEQAS. Residues 4035–4044 show a composition bias toward polar residues; it reads GTSFPDNAET. Basic and acidic residues predominate over residues 4065–4079; that stretch reads PVMKSKEPELTQEEI. 3 stretches are compositionally biased toward polar residues: residues 4182-4195, 4223-4234, and 4255-4271; these read LAEQSSFEQTSTIP, SATSGADYQQSF, and MESTQPELTQDHSSTTI. The span at 4571 to 4580 shows a compositional bias: basic and acidic residues; that stretch reads IVEKREDDKS. A compositionally biased stretch (polar residues) spans 4581–4594; the sequence is NITSGADYQQSFDQ. Residues 4613-4624 show a composition bias toward basic and acidic residues; it reads MESKEPELTQEE. Residues 4636–4645 are compositionally biased toward polar residues; sequence EQSSFEQAST. Residues 4730–4739 show a composition bias toward polar residues; it reads EQSSFEQAST. Over residues 4871–4890 the composition is skewed to low complexity; sequence EGSSSATSGADIPSSFDISS. The span at 5009–5023 shows a compositional bias: polar residues; the sequence is EATSGADTESISETT. Residues 5390 to 5407 are compositionally biased toward low complexity; the sequence is RRSSGADSRASNDSSASR. Positions 5486 to 5499 are enriched in polar residues; that stretch reads QISSRTESTNSRVS. The segment covering 5540-5550 has biased composition (pro residues); sequence PPIAISHPTPP. The span at 5560-5572 shows a compositional bias: low complexity; the sequence is RHSSGSSAHSQFG. 2 stretches are compositionally biased toward polar residues: residues 6225–6245 and 6270–6284; these read ASSGASGSFDNNNAQVLTSGF and KTVSPTPSADSMASR. 2 stretches are compositionally biased toward basic and acidic residues: residues 6285–6303 and 6376–6422; these read KSSEYDIRSISEIRQESES and GEGE…EESL. A compositionally biased stretch (polar residues) spans 6494-6505; that stretch reads LGTSAPTKSIPS. Low complexity predominate over residues 6590–6600; that stretch reads SPSVMSSSIMS. Residues 6670–6687 are compositionally biased toward polar residues; it reads ETDSSSSVITSRQPSRSP. The segment covering 6735 to 6747 has biased composition (low complexity); sequence SQVPSRQPSRSPS. Basic and acidic residues-rich tracts occupy residues 6998 to 7008 and 7045 to 7069; these read TERKQREESPT and ARSRRDSRDEVLHRREEDPEVHTPE. The segment covering 7071–7086 has biased composition (low complexity); that stretch reads SSTAVVTDVPSVSPVT. A compositionally biased stretch (basic and acidic residues) spans 7155-7175; that stretch reads TTKKTSDFDFPKETDEVFEKP. Residues 7248–7260 are compositionally biased toward acidic residues; the sequence is SDEESCSEDDEEY. Residues 7313–7331 show a composition bias toward low complexity; that stretch reads KTTTSQTPSTSTKPTVTAP. Over residues 7599 to 7609 the composition is skewed to basic and acidic residues; the sequence is SVRDDNERNEN. 2 stretches are compositionally biased toward low complexity: residues 7777–7788 and 7854–7880; these read SSASRPPSAAGS and AQTGTTQTTAASGSASNSIRPSIGSSS. Residues 7895 to 7915 are a coiled coil; sequence KKELKDVLIQRKQRLEATEIE. Residues 8510–8562 form a disordered region; it reads SRRRAQETALTSSNKISTGSRSYARRPIRPSSYRNPEATNSMPDRHVARRTAE. Polar residues-rich tracts occupy residues 8517–8530 and 8541–8551; these read TALTSSNKISTGSR and SYRNPEATNSM. The span at 8552–8562 shows a compositional bias: basic and acidic residues; that stretch reads PDRHVARRTAE. The 92-residue stretch at 8570 to 8661 folds into the PDZ domain; sequence RILLTRSYKH…EIEMVIRTYK (92 aa). One can recognise a C2 domain in the interval 8714-8835; that stretch reads CHGHIQVSLG…SAINTGPRWY (122 aa).

In terms of tissue distribution, expressed in the nervous system.

The protein resides in the synapse. The protein localises to the cell projection. It is found in the axon. In terms of biological role, required for synapse development in the active zone of presynaptic terminals of specific neurons including serotonergic NSM neurons. The active zone is a protein-dense neuronal region within the presynaptic bouton, from which synaptic vesicles send neurotransmitter signals across the synapse. Plays a role in the recruitment and clustering of synaptic vesicles in the active zone of presynaptic terminals in serotonergic NSM neurons, and coordinates the release of synaptic vesicles at presynaptic terminals to regulate neurotransmission at neuromuscular junctions. Regulates synapse number in inhibitory motor neurons and plays a role in spontaneous postsynaptic synaptic vesicle release in muscle cells. The polypeptide is Protein clarinet (Caenorhabditis elegans).